Reading from the N-terminus, the 1242-residue chain is ATP-dependent helicase/nuclease subunit A (1242 aa).

The UvrD-like helicase ATP-binding domain maps to 12 to 487 (SRWTDEQWKA…IDLASNFRSR (476 aa)). 33–40 (AAAGSGKT) contributes to the ATP binding site. In terms of domain architecture, UvrD-like helicase C-terminal spans 514-808 (AAQLKYGADY…RIMTIHSSKG (295 aa)).

The protein belongs to the helicase family. AddA subfamily. In terms of assembly, heterodimer of AddA and AddB/RexB. Mg(2+) is required as a cofactor.

The enzyme catalyses Couples ATP hydrolysis with the unwinding of duplex DNA by translocating in the 3'-5' direction.. The catalysed reaction is ATP + H2O = ADP + phosphate + H(+). Functionally, the heterodimer acts as both an ATP-dependent DNA helicase and an ATP-dependent, dual-direction single-stranded exonuclease. Recognizes the chi site generating a DNA molecule suitable for the initiation of homologous recombination. The AddA nuclease domain is required for chi fragment generation; this subunit has the helicase and 3' -&gt; 5' nuclease activities. This chain is ATP-dependent helicase/nuclease subunit A, found in Geobacillus kaustophilus (strain HTA426).